The sequence spans 32 residues: Giant hemoglobin AIV chain (32 aa).

It belongs to the globin family. In terms of assembly, giant hemoglobin is composed of four heme-containing chains (AI to AIV), and two linker chains (AV and AVI).

This Lamellibrachia sp. (Deep-sea giant tube worm) protein is Giant hemoglobin AIV chain.